Reading from the N-terminus, the 385-residue chain is tRNA 2-selenouridine synthase (385 aa).

The Rhodanese domain maps to 15–138; the sequence is FIADTPLIDV…ARQFLISTID (124 aa). Cys98 acts as the S-selanylcysteine intermediate in catalysis.

Belongs to the SelU family. Monomer.

It carries out the reaction 5-methylaminomethyl-2-thiouridine(34) in tRNA + selenophosphate + (2E)-geranyl diphosphate + H2O + H(+) = 5-methylaminomethyl-2-selenouridine(34) in tRNA + (2E)-thiogeraniol + phosphate + diphosphate. The catalysed reaction is 5-methylaminomethyl-2-thiouridine(34) in tRNA + (2E)-geranyl diphosphate = 5-methylaminomethyl-S-(2E)-geranyl-thiouridine(34) in tRNA + diphosphate. It catalyses the reaction 5-methylaminomethyl-S-(2E)-geranyl-thiouridine(34) in tRNA + selenophosphate + H(+) = 5-methylaminomethyl-2-(Se-phospho)selenouridine(34) in tRNA + (2E)-thiogeraniol. The enzyme catalyses 5-methylaminomethyl-2-(Se-phospho)selenouridine(34) in tRNA + H2O = 5-methylaminomethyl-2-selenouridine(34) in tRNA + phosphate. Its function is as follows. Involved in the post-transcriptional modification of the uridine at the wobble position (U34) of tRNA(Lys), tRNA(Glu) and tRNA(Gln). Catalyzes the conversion of 2-thiouridine (S2U-RNA) to 2-selenouridine (Se2U-RNA). Acts in a two-step process involving geranylation of 2-thiouridine (S2U) to S-geranyl-2-thiouridine (geS2U) and subsequent selenation of the latter derivative to 2-selenouridine (Se2U) in the tRNA chain. This is tRNA 2-selenouridine synthase from Nitrosomonas europaea (strain ATCC 19718 / CIP 103999 / KCTC 2705 / NBRC 14298).